The primary structure comprises 115 residues: U3-lycotoxin-Ls1j (115 aa).

Residues 1-20 (MKFVLLFGVFLVTLFSYSSA) form the signal peptide. Positions 21 to 44 (EMLDDFDQADEDELLSLIEKEEAR) are excised as a propeptide. Cystine bridges form between cysteine 48/cysteine 63, cysteine 55/cysteine 72, cysteine 62/cysteine 87, and cysteine 74/cysteine 85.

This sequence belongs to the neurotoxin 19 (CSTX) family. 01 subfamily. As to expression, expressed by the venom gland.

The protein localises to the secreted. The sequence is that of U3-lycotoxin-Ls1j from Lycosa singoriensis (Wolf spider).